The following is a 234-amino-acid chain: Ribonuclease HII (234 aa).

Residues 16–207 form the RNase H type-2 domain; that stretch reads ALVAGVDEAG…VRRMLTPKAI (192 aa). A divalent metal cation-binding residues include D22, E23, and D115.

This sequence belongs to the RNase HII family. It depends on Mn(2+) as a cofactor. Requires Mg(2+) as cofactor.

The protein resides in the cytoplasm. The enzyme catalyses Endonucleolytic cleavage to 5'-phosphomonoester.. Functionally, endonuclease that specifically degrades the RNA of RNA-DNA hybrids. This is Ribonuclease HII from Xylella fastidiosa (strain M12).